A 338-amino-acid polypeptide reads, in one-letter code: Glycerol-3-phosphate dehydrogenase [NAD(P)+] (338 aa).

NADPH-binding residues include Ser14, Phe15, Arg35, and Lys109. Sn-glycerol 3-phosphate contacts are provided by Lys109 and Gly137. NADPH is bound at residue Ala141. 5 residues coordinate sn-glycerol 3-phosphate: Lys192, Asp247, Ser257, Arg258, and Asn259. Catalysis depends on Lys192, which acts as the Proton acceptor. Arg258 contributes to the NADPH binding site. NADPH-binding residues include Leu282 and Glu284.

This sequence belongs to the NAD-dependent glycerol-3-phosphate dehydrogenase family.

The protein localises to the cytoplasm. The enzyme catalyses sn-glycerol 3-phosphate + NAD(+) = dihydroxyacetone phosphate + NADH + H(+). The catalysed reaction is sn-glycerol 3-phosphate + NADP(+) = dihydroxyacetone phosphate + NADPH + H(+). It functions in the pathway membrane lipid metabolism; glycerophospholipid metabolism. Its function is as follows. Catalyzes the reduction of the glycolytic intermediate dihydroxyacetone phosphate (DHAP) to sn-glycerol 3-phosphate (G3P), the key precursor for phospholipid synthesis. This is Glycerol-3-phosphate dehydrogenase [NAD(P)+] from Rickettsia rickettsii (strain Iowa).